The following is a 1079-amino-acid chain: Integrator complex subunit 3 homolog (1079 aa).

Disordered regions lie at residues 539–574 (ESSE…DDLP), 925–949 (YPSS…TPSA), and 1010–1079 (AVGR…NDSD). Residues 938–949 (KGSSAASSTPSA) show a composition bias toward low complexity. A phosphoserine mark is found at serine 1049, serine 1050, serine 1054, and serine 1055. The segment covering 1062–1073 (HKITQAAKKRKK) has biased composition (basic residues).

The protein belongs to the Integrator subunit 3 family. In terms of assembly, belongs to the multiprotein complex Integrator, at least composed of IntS1, IntS2, IntS3, IntS4, omd/IntS5, IntS6, defl/IntS7, IntS8, IntS9, IntS10, IntS11, IntS12, asun/IntS13, IntS14 and IntS15. The core complex associates with protein phosphatase 2A subunits mts/PP2A and Pp2A-29B, to form the Integrator-PP2A (INTAC) complex.

It is found in the nucleus. It localises to the cytoplasm. Its function is as follows. Component of the integrator complex, a multiprotein complex that terminates RNA polymerase II (Pol II) transcription in the promoter-proximal region of genes. The integrator complex provides a quality checkpoint during transcription elongation by driving premature transcription termination of transcripts that are unfavorably configured for transcriptional elongation: the complex terminates transcription by (1) catalyzing dephosphorylation of the C-terminal domain (CTD) of Pol II subunit Polr2A/Rbp1 and Spt5, and (2) degrading the exiting nascent RNA transcript via endonuclease activity. The integrator complex is also involved in the 3'-end processing of the U7 snRNA, and also the spliceosomal snRNAs U1, U2, U4 and U5. This chain is Integrator complex subunit 3 homolog (IntS3), found in Drosophila virilis (Fruit fly).